Consider the following 90-residue polypeptide: Acylphosphatase (90 aa).

An Acylphosphatase-like domain is found at 3–90 (HYHAIITGRV…AHYQDFRIKG (88 aa)). Active-site residues include arginine 18 and asparagine 36.

Belongs to the acylphosphatase family.

It catalyses the reaction an acyl phosphate + H2O = a carboxylate + phosphate + H(+). The polypeptide is Acylphosphatase (acyP) (Bacillus pumilus (strain SAFR-032)).